We begin with the raw amino-acid sequence, 164 residues long: IQ domain-containing protein F2 (164 aa).

2 consecutive IQ domains span residues 43–72 (RTKA…RAWI) and 99–128 (RERA…AIYI).

In Homo sapiens (Human), this protein is IQ domain-containing protein F2 (IQCF2).